Reading from the N-terminus, the 248-residue chain is UPF0736 protein BCAH187_A1335 (248 aa).

This sequence belongs to the UPF0736 family.

The protein is UPF0736 protein BCAH187_A1335 of Bacillus cereus (strain AH187).